We begin with the raw amino-acid sequence, 459 residues long: Argininosuccinate lyase (459 aa).

The protein belongs to the lyase 1 family. Argininosuccinate lyase subfamily.

The protein resides in the cytoplasm. The catalysed reaction is 2-(N(omega)-L-arginino)succinate = fumarate + L-arginine. The protein operates within amino-acid biosynthesis; L-arginine biosynthesis; L-arginine from L-ornithine and carbamoyl phosphate: step 3/3. This chain is Argininosuccinate lyase, found in Staphylococcus aureus (strain USA300).